Reading from the N-terminus, the 800-residue chain is MNTNSELSLENLNAAGDAAARAIPPLWPLASSVAVNPYLGQTAETLALAGARLGRVGGVPVTMPRAWYAARIADGTITDADLSAALAVNPTAAADLEALKAHAEQPESAQKPLPTLADLAADASGIDWPGILADRIGLWAAGYFDQGQALWAAPHRRGAYDAWRQYATHDLTPEIAGLSGFAQFVSETPDTADQASTRAANRLGLSDAALETYLHQLLFTLGGWAQVARYRLWQAELAGKSDATITDMLTIRLLWEEALFAQYEEEIGAEWEKVVAAHAAPVASDADLQVNAVLQEAWERAGQRDLAETFSMPAPKADDTRPALQAAFCIDVRSEVFRRALESLTPDIKTLGFAGFFGLTPAHKGFASDVDELRLPVLLNPGLTSTSQGDDAEADQTARFKARASRAWGRFKLAAVSSFAFVEATGPIYAGKLVRDALNMAPNDVPGGPMPRLDPSVDLAAQTDAAETILRAMSFTDNFARLVVLAGHGANVVNNPFASGLHCGACGGYSGEVNARLLAGLLNNVDVRRGLVERGITIPDDTIFVGALHDTTTDAMTLYEADHPSKAHAADLKQAKAWFLSAGSVTRAERALRLPRAEGTDDINLRSRDWAETRPEWALAGCKAFVAAPRQRTAGRSLEGRAFLHDYDWQQDKGFGVLELIMTAPVVVASWISLQYYGSTVSPDVFGSGNKLLHNVTGGIGVVEGNGGTLRTGLPWQSVHEGEDFAHEPLRLSVCIEAPREAMSDILKRHDGVRALFDNRWLHLFALDENGQMAWRYEGDLEWSQMPVASEAIPETEVAA.

Residues Cys329, Asp331, His488, and Cys503 each contribute to the Zn(2+) site.

Belongs to the inorganic carbon transporter (TC 9.A.2) DabA family. As to quaternary structure, forms a complex with DabB. Zn(2+) serves as cofactor.

The protein resides in the cell inner membrane. Part of an energy-coupled inorganic carbon pump. The protein is Probable inorganic carbon transporter subunit DabA of Roseobacter denitrificans (strain ATCC 33942 / OCh 114) (Erythrobacter sp. (strain OCh 114)).